The sequence spans 201 residues: Cytochrome c oxidase subunit 3 (201 aa).

4 consecutive transmembrane segments (helical) span residues 25–45 (VLGLLVFLISESLMFGGLFAA), 65–85 (LFVPTINTLILISSSFVIHYG), 100–120 (WYWITAAMGAVFLGGQVYEYL), and 137–157 (VMTGFHGLHVFIGILLILGVI).

This sequence belongs to the cytochrome c oxidase subunit 3 family.

Its subcellular location is the cell membrane. It catalyses the reaction 4 Fe(II)-[cytochrome c] + O2 + 8 H(+)(in) = 4 Fe(III)-[cytochrome c] + 2 H2O + 4 H(+)(out). In Thermostichus vulcanus (Synechococcus vulcanus), this protein is Cytochrome c oxidase subunit 3 (ctaE).